The chain runs to 438 residues: tRNA modification GTPase MnmE (438 aa).

R20, E79, and K119 together coordinate (6S)-5-formyl-5,6,7,8-tetrahydrofolate. Residues 215–360 (GVEVAIVGPP…LEAALAARVG (146 aa)) enclose the TrmE-type G domain. GTP is bound by residues 225-230 (NAGKSS), 244-250 (SDEAGTT), and 269-272 (DTAG). Positions 229 and 250 each coordinate Mg(2+). K438 contacts (6S)-5-formyl-5,6,7,8-tetrahydrofolate.

The protein belongs to the TRAFAC class TrmE-Era-EngA-EngB-Septin-like GTPase superfamily. TrmE GTPase family. In terms of assembly, homodimer. Heterotetramer of two MnmE and two MnmG subunits. Requires K(+) as cofactor.

It localises to the cytoplasm. Its function is as follows. Exhibits a very high intrinsic GTPase hydrolysis rate. Involved in the addition of a carboxymethylaminomethyl (cmnm) group at the wobble position (U34) of certain tRNAs, forming tRNA-cmnm(5)s(2)U34. The protein is tRNA modification GTPase MnmE of Parvibaculum lavamentivorans (strain DS-1 / DSM 13023 / NCIMB 13966).